We begin with the raw amino-acid sequence, 295 residues long: Dehydrodolichyl diphosphate synthase 6 (295 aa).

It belongs to the UPP synthase family. Requires Mg(2+) as cofactor.

Its pathway is protein modification; protein glycosylation. Its function is as follows. Catalyzes cis-prenyl chain elongation to produce the polyprenyl backbone of dolichol, a glycosyl carrier-lipid required for the biosynthesis of several classes of glycoprotein. In Arabidopsis thaliana (Mouse-ear cress), this protein is Dehydrodolichyl diphosphate synthase 6.